The chain runs to 98 residues: NADH-ubiquinone oxidoreductase chain 4L (98 aa).

3 helical membrane-spanning segments follow: residues 1-21, 29-49, and 61-81; these read MTLI…GLLM, ALLC…LTIL, and IILL…LVMV.

Belongs to the complex I subunit 4L family. Core subunit of respiratory chain NADH dehydrogenase (Complex I) which is composed of 45 different subunits.

The protein resides in the mitochondrion inner membrane. It carries out the reaction a ubiquinone + NADH + 5 H(+)(in) = a ubiquinol + NAD(+) + 4 H(+)(out). Its function is as follows. Core subunit of the mitochondrial membrane respiratory chain NADH dehydrogenase (Complex I) which catalyzes electron transfer from NADH through the respiratory chain, using ubiquinone as an electron acceptor. Part of the enzyme membrane arm which is embedded in the lipid bilayer and involved in proton translocation. This Balaenoptera omurai (Omura's baleen whale) protein is NADH-ubiquinone oxidoreductase chain 4L (MT-ND4L).